The primary structure comprises 317 residues: Ribosomal protein L11 methyltransferase (317 aa).

Residues Thr-158, Gly-179, Asp-201, and Asn-244 each coordinate S-adenosyl-L-methionine.

This sequence belongs to the methyltransferase superfamily. PrmA family.

It is found in the cytoplasm. The catalysed reaction is L-lysyl-[protein] + 3 S-adenosyl-L-methionine = N(6),N(6),N(6)-trimethyl-L-lysyl-[protein] + 3 S-adenosyl-L-homocysteine + 3 H(+). Functionally, methylates ribosomal protein L11. The sequence is that of Ribosomal protein L11 methyltransferase from Streptococcus pyogenes serotype M49 (strain NZ131).